The chain runs to 104 residues: Cuticle protein 67, isoform B (104 aa).

7 repeat units span residues 7–10 (AAPA), 14–17 (AAPA), 21–24 (AAPA), 28–31 (AAPA), 85–88 (AAPA), 92–95 (AAPA), and 98–101 (AAPA).

Component of the cuticle of migratory locust which contains more than 100 different structural proteins. The polypeptide is Cuticle protein 67, isoform B (Locusta migratoria (Migratory locust)).